The chain runs to 712 residues: Polyribonucleotide nucleotidyltransferase (712 aa).

2 residues coordinate Mg(2+): aspartate 487 and aspartate 493. The 60-residue stretch at 554–613 (PRIEVMNIPVDKIREVIGSGGKVIREIVEKTGAKINIEDDGTVKIASSSGKEIEAARKWI) folds into the KH domain. In terms of domain architecture, S1 motif spans 623–691 (GQIYEGTVVK…ERGKVRLSMK (69 aa)).

This sequence belongs to the polyribonucleotide nucleotidyltransferase family. Requires Mg(2+) as cofactor.

The protein resides in the cytoplasm. The catalysed reaction is RNA(n+1) + phosphate = RNA(n) + a ribonucleoside 5'-diphosphate. Its function is as follows. Involved in mRNA degradation. Catalyzes the phosphorolysis of single-stranded polyribonucleotides processively in the 3'- to 5'-direction. The protein is Polyribonucleotide nucleotidyltransferase of Rhizobium etli (strain ATCC 51251 / DSM 11541 / JCM 21823 / NBRC 15573 / CFN 42).